We begin with the raw amino-acid sequence, 427 residues long: N-acylglucosamine 2-epimerase (427 aa).

The segment at 195 to 216 (LLNLVEQLGEADEELAGKYAEL) is leucine-zipper.

This sequence belongs to the N-acylglucosamine 2-epimerase family. Homodimer. Forms a heterodimer with renin and inhibits its activity.

The catalysed reaction is an N-acyl-D-glucosamine = an N-acyl-D-mannosamine. It functions in the pathway amino-sugar metabolism; N-acetylneuraminate degradation. With respect to regulation, inhibited by N-ethylmaleimide, 5,5'-dithiobis-2-nitrobenzoate and iodoacetic acid. Functionally, catalyzes the interconversion of N-acetylglucosamine to N-acetylmannosamine. Involved in the N-glycolylneuraminic acid (Neu5Gc) degradation pathway: although human is not able to catalyze formation of Neu5Gc due to the inactive CMAHP enzyme, Neu5Gc is present in food and must be degraded. This Homo sapiens (Human) protein is N-acylglucosamine 2-epimerase (RENBP).